A 250-amino-acid chain; its full sequence is Adenosylcobinamide-GDP ribazoletransferase (250 aa).

The next 6 helical transmembrane spans lie at 32–52, 59–79, 113–133, 136–156, 185–205, and 230–250; these read KGII…MVAY, LAHS…TGGL, GVLA…GLGE, IYWG…YGCY, LTFI…LLPI, and CELT…AGLF.

The protein belongs to the CobS family. It depends on Mg(2+) as a cofactor.

Its subcellular location is the cell membrane. The enzyme catalyses alpha-ribazole + adenosylcob(III)inamide-GDP = adenosylcob(III)alamin + GMP + H(+). It carries out the reaction alpha-ribazole 5'-phosphate + adenosylcob(III)inamide-GDP = adenosylcob(III)alamin 5'-phosphate + GMP + H(+). Its pathway is cofactor biosynthesis; adenosylcobalamin biosynthesis; adenosylcobalamin from cob(II)yrinate a,c-diamide: step 7/7. Joins adenosylcobinamide-GDP and alpha-ribazole to generate adenosylcobalamin (Ado-cobalamin). Also synthesizes adenosylcobalamin 5'-phosphate from adenosylcobinamide-GDP and alpha-ribazole 5'-phosphate. This chain is Adenosylcobinamide-GDP ribazoletransferase, found in Alkaliphilus metalliredigens (strain QYMF).